The primary structure comprises 217 residues: Biotin transport regulator (217 aa).

Residues 14–49 form a disordered region; sequence GDGLGNLAGRSADPTGAADKGESGVPVPPTGFVDPT.

Functionally, may be part of a system that R.meliloti uses to respond to plant (alfalfa) biotin signals. This Rhizobium meliloti (strain 1021) (Ensifer meliloti) protein is Biotin transport regulator (bioS).